Reading from the N-terminus, the 326-residue chain is Aspartate carbamoyltransferase catalytic subunit (326 aa).

Carbamoyl phosphate is bound by residues arginine 58 and threonine 59. Residue lysine 86 participates in L-aspartate binding. Carbamoyl phosphate-binding residues include arginine 108, histidine 141, and glutamine 144. Positions 181 and 239 each coordinate L-aspartate. Carbamoyl phosphate contacts are provided by glycine 280 and proline 281.

This sequence belongs to the aspartate/ornithine carbamoyltransferase superfamily. ATCase family. In terms of assembly, heterododecamer (2C3:3R2) of six catalytic PyrB chains organized as two trimers (C3), and six regulatory PyrI chains organized as three dimers (R2).

The enzyme catalyses carbamoyl phosphate + L-aspartate = N-carbamoyl-L-aspartate + phosphate + H(+). It participates in pyrimidine metabolism; UMP biosynthesis via de novo pathway; (S)-dihydroorotate from bicarbonate: step 2/3. Functionally, catalyzes the condensation of carbamoyl phosphate and aspartate to form carbamoyl aspartate and inorganic phosphate, the committed step in the de novo pyrimidine nucleotide biosynthesis pathway. This is Aspartate carbamoyltransferase catalytic subunit from Synechococcus sp. (strain JA-2-3B'a(2-13)) (Cyanobacteria bacterium Yellowstone B-Prime).